Here is a 331-residue protein sequence, read N- to C-terminus: Inactive serine/threonine-protein kinase BKN1 (331 aa).

Gly-2 carries N-myristoyl glycine lipidation. Cys-4 is lipidated: S-palmitoyl cysteine. One can recognise a Protein kinase domain in the interval Asp-58 to Glu-328.

The protein belongs to the protein kinase superfamily. Ser/Thr protein kinase family. Restricted to stigma in flowers.

The protein localises to the cell membrane. It localises to the nucleus. In terms of biological role, collaboratively with BKN2/SZE2, involved in compatible pollen-stigma interactions. The chain is Inactive serine/threonine-protein kinase BKN1 from Arabidopsis thaliana (Mouse-ear cress).